The primary structure comprises 336 residues: Glycerol-3-phosphate dehydrogenase [NAD(P)+] (336 aa).

NADPH is bound by residues Ser-16, Tyr-17, His-37, and Lys-111. Lys-111, Gly-140, and Thr-142 together coordinate sn-glycerol 3-phosphate. Residue Ala-144 participates in NADPH binding. The sn-glycerol 3-phosphate site is built by Lys-196, Asp-249, Ser-259, Arg-260, and Asn-261. Catalysis depends on Lys-196, which acts as the Proton acceptor. Arg-260 contacts NADPH. 2 residues coordinate NADPH: Val-284 and Glu-286.

The protein belongs to the NAD-dependent glycerol-3-phosphate dehydrogenase family.

It localises to the cytoplasm. It catalyses the reaction sn-glycerol 3-phosphate + NAD(+) = dihydroxyacetone phosphate + NADH + H(+). It carries out the reaction sn-glycerol 3-phosphate + NADP(+) = dihydroxyacetone phosphate + NADPH + H(+). It functions in the pathway membrane lipid metabolism; glycerophospholipid metabolism. Functionally, catalyzes the reduction of the glycolytic intermediate dihydroxyacetone phosphate (DHAP) to sn-glycerol 3-phosphate (G3P), the key precursor for phospholipid synthesis. This is Glycerol-3-phosphate dehydrogenase [NAD(P)+] from Glaesserella parasuis serovar 5 (strain SH0165) (Haemophilus parasuis).